Reading from the N-terminus, the 347-residue chain is Microneme protein 21 (347 aa).

It is found in the cytoplasmic vesicle. Its subcellular location is the secretory vesicle. The protein resides in the microneme. It localises to the secreted. This is Microneme protein 21 from Toxoplasma gondii.